A 358-amino-acid chain; its full sequence is Probable D-xylulose reductase A (358 aa).

Zn(2+) is bound by residues C47, H72, and E73. 182 to 187 (GAGPVG) serves as a coordination point for NAD(+).

This sequence belongs to the zinc-containing alcohol dehydrogenase family. The cofactor is Zn(2+).

It catalyses the reaction xylitol + NAD(+) = D-xylulose + NADH + H(+). It functions in the pathway carbohydrate degradation; L-arabinose degradation via L-arabinitol; D-xylulose 5-phosphate from L-arabinose (fungal route): step 4/5. Its function is as follows. Xylitol dehydrogenase which catalyzes the conversion of xylitol to D-xylulose. Xylose is a major component of hemicelluloses such as xylan. Most fungi utilize D-xylose via three enzymatic reactions, xylose reductase (XR), xylitol dehydrogenase (XDH), and xylulokinase, to form xylulose 5-phosphate, which enters pentose phosphate pathway. This chain is Probable D-xylulose reductase A (xdhA), found in Aspergillus fumigatus (strain CBS 144.89 / FGSC A1163 / CEA10) (Neosartorya fumigata).